Consider the following 241-residue polypeptide: SURF1-like protein (241 aa).

The next 2 membrane-spanning stretches (helical) occupy residues 5 to 25 and 199 to 219; these read LTVL…LNRL and LEYA…YRIY.

The protein belongs to the SURF1 family.

It is found in the cell membrane. This Rickettsia bellii (strain RML369-C) protein is SURF1-like protein.